Consider the following 487-residue polypeptide: Kynureninase 1 (487 aa).

Pyridoxal 5'-phosphate-binding positions include Leu-149, Thr-150, 177-180 (FPSD), Ser-234, Asp-263, His-266, and Tyr-288. N6-(pyridoxal phosphate)lysine is present on Lys-289. Residues Trp-329 and Asn-357 each coordinate pyridoxal 5'-phosphate.

The protein belongs to the kynureninase family. In terms of assembly, homodimer. Pyridoxal 5'-phosphate is required as a cofactor.

It localises to the cytoplasm. The enzyme catalyses L-kynurenine + H2O = anthranilate + L-alanine + H(+). The catalysed reaction is 3-hydroxy-L-kynurenine + H2O = 3-hydroxyanthranilate + L-alanine + H(+). The protein operates within amino-acid degradation; L-kynurenine degradation; L-alanine and anthranilate from L-kynurenine: step 1/1. It participates in cofactor biosynthesis; NAD(+) biosynthesis; quinolinate from L-kynurenine: step 2/3. In terms of biological role, catalyzes the cleavage of L-kynurenine (L-Kyn) and L-3-hydroxykynurenine (L-3OHKyn) into anthranilic acid (AA) and 3-hydroxyanthranilic acid (3-OHAA), respectively. The chain is Kynureninase 1 (bna5-1) from Emericella nidulans (strain FGSC A4 / ATCC 38163 / CBS 112.46 / NRRL 194 / M139) (Aspergillus nidulans).